A 558-amino-acid polypeptide reads, in one-letter code: Dihydroxy-acid dehydratase (558 aa).

Cys-48 contributes to the [2Fe-2S] cluster binding site. Asp-80 is a binding site for Mg(2+). Residue Cys-121 coordinates [2Fe-2S] cluster. Mg(2+) contacts are provided by Asp-122 and Lys-123. Residue Lys-123 is modified to N6-carboxylysine. Cys-193 contacts [2Fe-2S] cluster. Glu-445 serves as a coordination point for Mg(2+). The active-site Proton acceptor is Ser-471.

The protein belongs to the IlvD/Edd family. In terms of assembly, homodimer. Requires [2Fe-2S] cluster as cofactor. The cofactor is Mg(2+).

It carries out the reaction (2R)-2,3-dihydroxy-3-methylbutanoate = 3-methyl-2-oxobutanoate + H2O. The enzyme catalyses (2R,3R)-2,3-dihydroxy-3-methylpentanoate = (S)-3-methyl-2-oxopentanoate + H2O. The protein operates within amino-acid biosynthesis; L-isoleucine biosynthesis; L-isoleucine from 2-oxobutanoate: step 3/4. It functions in the pathway amino-acid biosynthesis; L-valine biosynthesis; L-valine from pyruvate: step 3/4. Functions in the biosynthesis of branched-chain amino acids. Catalyzes the dehydration of (2R,3R)-2,3-dihydroxy-3-methylpentanoate (2,3-dihydroxy-3-methylvalerate) into 2-oxo-3-methylpentanoate (2-oxo-3-methylvalerate) and of (2R)-2,3-dihydroxy-3-methylbutanoate (2,3-dihydroxyisovalerate) into 2-oxo-3-methylbutanoate (2-oxoisovalerate), the penultimate precursor to L-isoleucine and L-valine, respectively. The protein is Dihydroxy-acid dehydratase of Prochlorococcus marinus (strain SARG / CCMP1375 / SS120).